The following is a 114-amino-acid chain: Nucleoid-associated protein PCC7424_2224 (114 aa).

Belongs to the YbaB/EbfC family. In terms of assembly, homodimer.

It localises to the cytoplasm. The protein localises to the nucleoid. In terms of biological role, binds to DNA and alters its conformation. May be involved in regulation of gene expression, nucleoid organization and DNA protection. The sequence is that of Nucleoid-associated protein PCC7424_2224 from Gloeothece citriformis (strain PCC 7424) (Cyanothece sp. (strain PCC 7424)).